Here is a 419-residue protein sequence, read N- to C-terminus: UDP-N-acetylglucosamine 1-carboxyvinyltransferase (419 aa).

Residue Lys-22 to Asn-23 coordinates phosphoenolpyruvate. Arg-92 lines the UDP-N-acetyl-alpha-D-glucosamine pocket. Residue Cys-116 is the Proton donor of the active site. Cys-116 is subject to 2-(S-cysteinyl)pyruvic acid O-phosphothioketal. UDP-N-acetyl-alpha-D-glucosamine contacts are provided by residues Arg-121–Gln-125, Asp-306, and Ile-328.

Belongs to the EPSP synthase family. MurA subfamily.

The protein localises to the cytoplasm. The catalysed reaction is phosphoenolpyruvate + UDP-N-acetyl-alpha-D-glucosamine = UDP-N-acetyl-3-O-(1-carboxyvinyl)-alpha-D-glucosamine + phosphate. It functions in the pathway cell wall biogenesis; peptidoglycan biosynthesis. Its function is as follows. Cell wall formation. Adds enolpyruvyl to UDP-N-acetylglucosamine. Target for the antibiotic phosphomycin. The chain is UDP-N-acetylglucosamine 1-carboxyvinyltransferase from Acinetobacter guillouiae (Acinetobacter genomosp. 11).